Reading from the N-terminus, the 736-residue chain is MKTEAQPSTSLLANTSWTGTVISDSVPGSQTWEDKGSLTRSATSWTSEAQVSAARVAEAQARTSQPKQISVLEALTASALNQKPTHEKVQMTEKKESEVLLARPFWSSKTEYILAQVGFSMKPSCLWRFAYLWLNSGGCSFAAIYIFMLFLVGVPLLFLEMAAGQSMRQGGMGVWKIIAPWIGGVGYSSFMVCFILGLYFNVVNSWIIFYMSQSFQFPVPWEKCPLTMNSSGFDPECERTTPSIYFWYQQALKASDRIEDGGSPVYSLVLPFFLCWCLVGAFMINGLKSTGKVIYVLVLLPCFIIVGFFIRTLLLEGAKFGLQQLVVAKISDVYNMSVWSLAGGQVLSNTGIGLGSVASLASYMPQSNNCLSDAFLVSVINLLTLLVFTSFNFCVLGFWATVITHRCCERNAEILLKLINLGKLPPDAKPPVNLLYNPTSIYNAWLSGLPQHIKSMVLREVTECNIETQFLKASEGPKFAFLSFVEAMSFLPPSVFWSFIFFLMLLAMGLSSAIGIMQGIITPLQDTFSFFRKHTKLLIVGVFLLMFVCGLFFTRPSGSYFIRLLSDYWIVFPIIVVVVFETMAVSWAYGARRFLADLTILLGHPISPIFGWLWPHLCPVVLLIIFVTMMVHLCMKPITYMSWDSSTSKEVLRPYPPWALLLMITLFAIVILPIPAYFVYCRIHRIPFRPKSGDGPMTASTSLPLSHQLTPSKEVQKEEILQVDETKYPSTCNVTS.

The Cytoplasmic portion of the chain corresponds to 1–138 (MKTEAQPSTS…FAYLWLNSGG (138 aa)). Helical transmembrane passes span 139–159 (CSFA…LLFL), 177–197 (IIAP…FILG), and 199–219 (YFNV…QFPV). Residues 220–263 (PWEKCPLTMNSSGFDPECERTTPSIYFWYQQALKASDRIEDGGS) are Extracellular-facing. N-linked (GlcNAc...) asparagine glycosylation occurs at asparagine 229. A run of 4 helical transmembrane segments spans residues 264-284 (PVYS…AFMI), 290-310 (TGKV…GFFI), 338-358 (VWSL…GSVA), and 383-403 (LTLL…ATVI). Residues 404-495 (THRCCERNAE…EAMSFLPPSV (92 aa)) lie on the Extracellular side of the membrane. The next 5 helical transmembrane spans lie at 496 to 516 (FWSF…AIGI), 534 to 554 (HTKL…LFFT), 568 to 588 (YWIV…VSWA), 609 to 629 (IFGW…FVTM), and 659 to 679 (ALLL…AYFV). The Cytoplasmic portion of the chain corresponds to 680–736 (YCRIHRIPFRPKSGDGPMTASTSLPLSHQLTPSKEVQKEEILQVDETKYPSTCNVTS).

The protein belongs to the sodium:neurotransmitter symporter (SNF) (TC 2.A.22) family. SLC6A16 subfamily. In terms of tissue distribution, highly expressed in peripheral tissues, particularly in testis, pancreas, and prostate.

It is found in the membrane. This is Orphan sodium- and chloride-dependent neurotransmitter transporter NTT5 (SLC6A16) from Homo sapiens (Human).